Consider the following 190-residue polypeptide: MRNVWLIVPFALLAAFSGETWAQADRDLYIDSTESSGNYPVDDDDYSSGSGSGIPAHDDDEDNVVLTTVQTLISSPSSEMPYVDTTTLKTQTKMAPETKEPGEVESTNTVLVHENKNIIQTATHTENLFHRTEVLAAVIAGGGIGFLFAVFLILLLVYRMRKKDEGSYDLGERKPSSAVYQKAPTKEFYA.

Positions methionine 1–alanine 22 are cleaved as a signal peptide. Topologically, residues glutamine 23–alanine 136 are extracellular. Residues glutamate 34 to aspartate 60 are disordered. Residues serine 36, serine 48, serine 50, and serine 52 are each glycosylated (O-linked (Xyl...) (glycosaminoglycan) serine). A helical membrane pass occupies residues alanine 137–valine 157. Residues tyrosine 158 to alanine 190 are Cytoplasmic-facing. Positions serine 167–alanine 190 are disordered.

It belongs to the syndecan proteoglycan family. Post-translationally, O-glycosylated; contains both heparan sulfate and chondroitin sulfate.

It is found in the membrane. Its function is as follows. Cell surface proteoglycan. The sequence is that of Syndecan-2-B (sdc2-b) from Xenopus laevis (African clawed frog).